The chain runs to 343 residues: Phosphate acyltransferase (343 aa).

It belongs to the PlsX family. Homodimer. Probably interacts with PlsY.

The protein resides in the cytoplasm. It carries out the reaction a fatty acyl-[ACP] + phosphate = an acyl phosphate + holo-[ACP]. It participates in lipid metabolism; phospholipid metabolism. In terms of biological role, catalyzes the reversible formation of acyl-phosphate (acyl-PO(4)) from acyl-[acyl-carrier-protein] (acyl-ACP). This enzyme utilizes acyl-ACP as fatty acyl donor, but not acyl-CoA. In Acidovorax sp. (strain JS42), this protein is Phosphate acyltransferase.